A 283-amino-acid chain; its full sequence is Phosphate import ATP-binding protein PstB (283 aa).

Over residues 1–20 the composition is skewed to polar residues; that stretch reads MAQTLAQTKQISQSHTFDVS. The interval 1–32 is disordered; the sequence is MAQTLAQTKQISQSHTFDVSQSHHKTPDDTNS. An ABC transporter domain is found at 37–278; it reads YSTQNLDLWY…PSNKKTEDYI (242 aa). 69 to 76 is a binding site for ATP; sequence GPSGCGKS.

It belongs to the ABC transporter superfamily. Phosphate importer (TC 3.A.1.7) family. The complex is composed of two ATP-binding proteins (PstB), two transmembrane proteins (PstC and PstA) and a solute-binding protein (PstS).

The protein localises to the cell membrane. The catalysed reaction is phosphate(out) + ATP + H2O = ADP + 2 phosphate(in) + H(+). Its function is as follows. Part of the ABC transporter complex PstSACB involved in phosphate import. Responsible for energy coupling to the transport system. The protein is Phosphate import ATP-binding protein PstB of Staphylococcus aureus (strain USA300).